The primary structure comprises 680 residues: Collagen alpha-1(X) chain (680 aa).

The first 18 residues, 1 to 18, serve as a signal peptide directing secretion; it reads MLPQIPFLLLMFLTLVHG. A nonhelical region (NC2) region spans residues 19–56; it reads MFYAERYQTPTGIKGPLASPKTQYFIPYAIKSKGIPVR. Positions 54–531 are disordered; it reads PVRGEQGIPG…PDGFIKAGQR (478 aa). The tract at residues 57–519 is triple-helical region; sequence GEQGIPGPPG…PGPPGPPGQA (463 aa). 2 stretches are compositionally biased toward pro residues: residues 137 to 147 and 207 to 216; these read PRGPPGPPGIP and PQGPIGPPGP. Low complexity-rich tracts occupy residues 303–321, 373–382, and 391–409; these read LPGLRGQRGPAGLPGAPGA, PGARGARGPP, and PGEPGLNGPKGNPGLPGQK. Residues 410–419 show a composition bias toward gly residues; sequence GDPGVGGTPG. Composition is skewed to low complexity over residues 423–433 and 442–453; these read PVGPVGAKGVP and RGEPGIPGTRGP. The segment covering 506–516 has biased composition (pro residues); it reads LPGPPGPPGPP. Positions 520–680 are nonhelical region (NC1); sequence VMPDGFIKAG…SFSGFLVAPM (161 aa). Residues 547-680 form the C1q domain; it reads TGMPVSAFTV…SFSGFLVAPM (134 aa). Ca(2+) contacts are provided by D626, E627, L633, and D634.

In terms of assembly, homotrimer. Prolines at the third position of the tripeptide repeating unit (G-X-Y) are hydroxylated in some or all of the chains.

The protein resides in the secreted. Its subcellular location is the extracellular space. It localises to the extracellular matrix. Type X collagen is a product of hypertrophic chondrocytes and has been localized to presumptive mineralization zones of hyaline cartilage. The chain is Collagen alpha-1(X) chain (Col10a1) from Mus musculus (Mouse).